Here is an 892-residue protein sequence, read N- to C-terminus: Dipeptidyl peptidase 8 (892 aa).

Catalysis depends on charge relay system residues Ser749, Asp827, and His859.

The protein belongs to the peptidase S9B family. DPPIV subfamily. Homodimer. Forms a ternary complex with NLRP1, composed of a DPP8 homodimer, one full-length NLRP1 protein, and one cleaved C-terminus of NLRP1 (NACHT, LRR and PYD domains-containing protein 1, C-terminus). Forms a ternary complex with CARD8, composed of a DPP8 homodimer, one full-length NLRP1 protein, and one cleaved C-terminus of CARD8 (Caspase recruitment domain-containing protein 8, C-terminus). In the ternary complex, only one subunit of the DPP8 homodimer is bound to NLRP1 or CARD8.

The protein resides in the cytoplasm. It catalyses the reaction Release of an N-terminal dipeptide, Xaa-Yaa-|-Zaa-, from a polypeptide, preferentially when Yaa is Pro, provided Zaa is neither Pro nor hydroxyproline.. Inhibited by zinc. Inhibited by the serine proteinase inhibitor 4-(2-aminoethyl)benzenesulphonyl fluoride (AEBSF), and by di-isopropylfluorophosphate. Specifically inhibited by isoindoline derivatives. Inhibited by Val-boroPro (Talabostat, PT-100), a non-selective inhibitor, which triggers pyroptosis in monocytes and macrophages. Dipeptidyl peptidase that cleaves off N-terminal dipeptides from proteins having a Pro or Ala residue at position 2. Acts as a key inhibitor of caspase-1-dependent monocyte and macrophage pyroptosis in resting cells by preventing activation of NLRP1 and CARD8. Sequesters the cleaved C-terminal part of NLRP1 and CARD8, which respectively constitute the active part of the NLRP1 and CARD8 inflammasomes, in a ternary complex, thereby preventing their oligomerization and activation. The dipeptidyl peptidase activity is required to suppress NLRP1 and CARD8; however, neither NLRP1 nor CARD8 are bona fide substrates of DPP8, suggesting the existence of substrate(s) required for NLRP1 and CARD8 inhibition. The chain is Dipeptidyl peptidase 8 from Mus musculus (Mouse).